A 361-amino-acid polypeptide reads, in one-letter code: Histidinol-phosphate aminotransferase (361 aa).

N6-(pyridoxal phosphate)lysine is present on K219.

Belongs to the class-II pyridoxal-phosphate-dependent aminotransferase family. Histidinol-phosphate aminotransferase subfamily. Homodimer. Requires pyridoxal 5'-phosphate as cofactor.

The catalysed reaction is L-histidinol phosphate + 2-oxoglutarate = 3-(imidazol-4-yl)-2-oxopropyl phosphate + L-glutamate. The protein operates within amino-acid biosynthesis; L-histidine biosynthesis; L-histidine from 5-phospho-alpha-D-ribose 1-diphosphate: step 7/9. This Cereibacter sphaeroides (strain KD131 / KCTC 12085) (Rhodobacter sphaeroides) protein is Histidinol-phosphate aminotransferase.